A 426-amino-acid polypeptide reads, in one-letter code: L-cysteine:1D-myo-inositol 2-amino-2-deoxy-alpha-D-glucopyranoside ligase (426 aa).

Zn(2+) is bound at residue Cys43. L-cysteinyl-5'-AMP is bound by residues Cys43–Thr46, Ser58, and Asn81–Thr83. Residues Ile45 to His55 carry the 'HIGH' region motif. The short motif at Glu200–Pro205 is the 'ERGGDP' region element. Trp241 serves as a coordination point for L-cysteinyl-5'-AMP. Cys245 serves as a coordination point for Zn(2+). Gly263–Asp265 contributes to the L-cysteinyl-5'-AMP binding site. His270 is a Zn(2+) binding site. Val296 is a binding site for L-cysteinyl-5'-AMP. The 'KMSKS' region motif lies at Lys302–Ser306.

This sequence belongs to the class-I aminoacyl-tRNA synthetase family. MshC subfamily. As to quaternary structure, monomer. It depends on Zn(2+) as a cofactor.

It carries out the reaction 1D-myo-inositol 2-amino-2-deoxy-alpha-D-glucopyranoside + L-cysteine + ATP = 1D-myo-inositol 2-(L-cysteinylamino)-2-deoxy-alpha-D-glucopyranoside + AMP + diphosphate + H(+). Its function is as follows. Catalyzes the ATP-dependent condensation of GlcN-Ins and L-cysteine to form L-Cys-GlcN-Ins. The chain is L-cysteine:1D-myo-inositol 2-amino-2-deoxy-alpha-D-glucopyranoside ligase from Arthrobacter sp. (strain FB24).